The following is a 24-amino-acid chain: Poly-His-poly-Gly peptide 1 (24 aa).

The segment covering 1–13 has biased composition (basic residues); it reads EDDHHHHHHHHHG. Residues 1–24 are disordered; that stretch reads EDDHHHHHHHHHGVGGGGGGGGGG. Gly residues predominate over residues 14–24; that stretch reads VGGGGGGGGGG.

As to expression, expressed by the venom gland.

It localises to the secreted. May serve as a metalloproteinase inhibitor during glandular storage. Their inhibition may be instantly disengaged, by dilution or physiochemical change, when venom is injected into tissue of the victim. This chain is Poly-His-poly-Gly peptide 1, found in Atheris chlorechis (Western bush viper).